The following is a 621-amino-acid chain: MAU2 chromatid cohesion factor homolog (621 aa).

TPR repeat units follow at residues 96–129 (FDTA…SQNN), 451–484 (GGFY…ANAE), and 491–524 (SCSL…ASKI).

It belongs to the SCC4/mau-2 family. Interacts with Nipped-B to form the cohesin loading complex.

Its subcellular location is the nucleus. The protein resides in the nucleoplasm. Required for association of the cohesin complex with chromatin during interphase. Plays a role in sister chromatid cohesion and normal progression through prometaphase. This chain is MAU2 chromatid cohesion factor homolog, found in Drosophila virilis (Fruit fly).